The sequence spans 382 residues: Succinyl-diaminopimelate desuccinylase (382 aa).

Histidine 73 contacts Zn(2+). The active site involves aspartate 75. Aspartate 106 contributes to the Zn(2+) binding site. The active-site Proton acceptor is glutamate 140. Residues glutamate 141, glutamate 169, and histidine 355 each coordinate Zn(2+).

This sequence belongs to the peptidase M20A family. DapE subfamily. In terms of assembly, homodimer. Requires Zn(2+) as cofactor. Co(2+) serves as cofactor.

The enzyme catalyses N-succinyl-(2S,6S)-2,6-diaminopimelate + H2O = (2S,6S)-2,6-diaminopimelate + succinate. It functions in the pathway amino-acid biosynthesis; L-lysine biosynthesis via DAP pathway; LL-2,6-diaminopimelate from (S)-tetrahydrodipicolinate (succinylase route): step 3/3. Catalyzes the hydrolysis of N-succinyl-L,L-diaminopimelic acid (SDAP), forming succinate and LL-2,6-diaminopimelate (DAP), an intermediate involved in the bacterial biosynthesis of lysine and meso-diaminopimelic acid, an essential component of bacterial cell walls. This is Succinyl-diaminopimelate desuccinylase from Leptothrix cholodnii (strain ATCC 51168 / LMG 8142 / SP-6) (Leptothrix discophora (strain SP-6)).